Consider the following 141-residue polypeptide: Protein NrdI (141 aa).

This sequence belongs to the NrdI family.

Probably involved in ribonucleotide reductase function. This Wigglesworthia glossinidia brevipalpis protein is Protein NrdI.